The sequence spans 265 residues: Thiamine thiazole synthase (265 aa).

NAD(+) contacts are provided by residues alanine 43, 62 to 63, glycine 70, valine 134, and 162 to 164; these read ER and HVD. Residues aspartate 164 and histidine 179 each contribute to the Fe cation site. NAD(+) is bound at residue methionine 229. Arginine 239 contacts glycine.

Belongs to the THI4 family. Homooctamer; tetramer of dimers. It depends on Fe(2+) as a cofactor.

The enzyme catalyses hydrogen sulfide + glycine + NAD(+) = ADP-5-ethyl-4-methylthiazole-2-carboxylate + nicotinamide + 3 H2O + H(+). It functions in the pathway cofactor biosynthesis; thiamine diphosphate biosynthesis. In terms of biological role, involved in the biosynthesis of the thiazole moiety of thiamine. Catalyzes the conversion of NAD and glycine to adenosine diphosphate 5-(2-hydroxyethyl)-4-methylthiazole-2-carboxylate (ADT), an adenylated thiazole intermediate, using free sulfide as a source of sulfur. The polypeptide is Thiamine thiazole synthase (Sulfolobus acidocaldarius (strain ATCC 33909 / DSM 639 / JCM 8929 / NBRC 15157 / NCIMB 11770)).